A 333-amino-acid chain; its full sequence is Methylosome protein WDR77 (333 aa).

WD repeat units lie at residues 16–59 (CMEV…GAPN), 68–106 (QTEA…SLLV), 113–152 (EHDD…VLKS), 155–195 (AHSS…PATR), 199–240 (CASD…SAQT), 243–283 (VHSQ…VFRD), and 285–328 (SHRD…NLIA).

In terms of assembly, heterotetramer; dimer of heterodimer with prmt5. Interacts with histone h2a and h4 and with nucleoplasmin. Detected in egg (at protein level).

The protein localises to the cytoplasm. Its subcellular location is the nucleus. In terms of biological role, non-catalytic component of the 20S prmt5-containing methyltransferase complex, which modifies specific arginines to dimethylarginines in several spliceosomal Sm proteins and histones. Required for normal prmt5 methyltransferase activity. In Xenopus laevis (African clawed frog), this protein is Methylosome protein WDR77.